The primary structure comprises 130 residues: Small ribosomal subunit protein uS9 (130 aa).

Belongs to the universal ribosomal protein uS9 family.

The protein is Small ribosomal subunit protein uS9 of Pseudomonas putida (strain ATCC 700007 / DSM 6899 / JCM 31910 / BCRC 17059 / LMG 24140 / F1).